The chain runs to 204 residues: Small rubber particle protein (204 aa).

It belongs to the REF/SRPP family. Auto-assembles in solution into stable nanomultimers of a globular nature. In terms of processing, not glycosylated. The N-terminus is blocked. Post-translationally, consistent shifts of about 266 Da observed by MS in various forms of the intact protein suggest the addition of stearolyl groups. As to expression, highly expressed in the specialized vessel laticifers, but localized only in the laticifer layers in the conducting phloem. Also detected in leaves.

Its subcellular location is the cytoplasm. Its function is as follows. Involved in the biosynthesis of rubber, an isoprenoid polymer (cis-1,4-polyisoprene). In Hevea brasiliensis (Para rubber tree), this protein is Small rubber particle protein.